The following is a 345-amino-acid chain: tRNA N6-adenosine threonylcarbamoyltransferase (345 aa).

His-109 and His-113 together coordinate Fe cation. Substrate is bound by residues 136-140 (TVSGG), Asp-169, Gly-182, Asp-186, and Asn-284. Residue Asp-312 participates in Fe cation binding.

It belongs to the KAE1 / TsaD family. The cofactor is Fe(2+).

Its subcellular location is the cytoplasm. It carries out the reaction L-threonylcarbamoyladenylate + adenosine(37) in tRNA = N(6)-L-threonylcarbamoyladenosine(37) in tRNA + AMP + H(+). Its function is as follows. Required for the formation of a threonylcarbamoyl group on adenosine at position 37 (t(6)A37) in tRNAs that read codons beginning with adenine. Is involved in the transfer of the threonylcarbamoyl moiety of threonylcarbamoyl-AMP (TC-AMP) to the N6 group of A37, together with TsaE and TsaB. TsaD likely plays a direct catalytic role in this reaction. The polypeptide is tRNA N6-adenosine threonylcarbamoyltransferase (Chlorobium phaeovibrioides (strain DSM 265 / 1930) (Prosthecochloris vibrioformis (strain DSM 265))).